Here is an 85-residue protein sequence, read N- to C-terminus: Growth factor (85 aa).

An N-terminal signal peptide occupies residues 1–19; sequence MVPRDLVATLLCAMCIVQA. The 45-residue stretch at 33-77 folds into the EGF-like domain; sequence RIKLCNDDYKNYCLNNGTCFTVALNNVSLNPFCACHINYVGSRCQ. Cystine bridges form between cysteine 37-cysteine 51, cysteine 45-cysteine 65, and cysteine 67-cysteine 76. Asparagine 48 and asparagine 58 each carry an N-linked (GlcNAc...) asparagine; by host glycan.

The protein localises to the secreted. In terms of biological role, stimulates the growth of some tissues. This Oryctolagus cuniculus (Rabbit) protein is Growth factor (MGF).